A 640-amino-acid chain; its full sequence is Probable potassium transport system protein Kup 1 (640 aa).

Helical transmembrane passes span 24–44 (LGAL…TSPL), 67–87 (IASL…VLFV), 116–136 (VGPL…DGMI), 154–174 (PFFA…LFTI), 186–206 (FGPV…TEVV), 222–242 (TFLF…VLAV), 264–284 (WFAL…ALIL), 296–316 (MLVP…ATVI), 354–374 (IYIP…VVGF), 382–402 (AAYG…ALVV), 411–431 (LWLC…FLGA), and 436–456 (VTQG…LMAT).

The protein belongs to the HAK/KUP transporter (TC 2.A.72) family.

The protein localises to the cell inner membrane. The enzyme catalyses K(+)(in) + H(+)(in) = K(+)(out) + H(+)(out). Its function is as follows. Transport of potassium into the cell. Likely operates as a K(+):H(+) symporter. The chain is Probable potassium transport system protein Kup 1 from Paramagnetospirillum magneticum (strain ATCC 700264 / AMB-1) (Magnetospirillum magneticum).